Consider the following 445-residue polypeptide: Ribosomal protein uS12 methylthiotransferase RimO (445 aa).

The MTTase N-terminal domain maps to 13–123; sequence PRVGFVSLGC…VMAAIHHHLP (111 aa). Cys22, Cys58, Cys87, Cys154, Cys158, and Cys161 together coordinate [4Fe-4S] cluster. The Radical SAM core domain maps to 140-377; the sequence is LTPKHYAYLK…MQQQEIISKQ (238 aa). One can recognise a TRAM domain in the interval 380 to 445; that stretch reads AVKKGQQLRV…DIHDLWTEKI (66 aa).

Belongs to the methylthiotransferase family. RimO subfamily. [4Fe-4S] cluster serves as cofactor.

Its subcellular location is the cytoplasm. It catalyses the reaction L-aspartate(89)-[ribosomal protein uS12]-hydrogen + (sulfur carrier)-SH + AH2 + 2 S-adenosyl-L-methionine = 3-methylsulfanyl-L-aspartate(89)-[ribosomal protein uS12]-hydrogen + (sulfur carrier)-H + 5'-deoxyadenosine + L-methionine + A + S-adenosyl-L-homocysteine + 2 H(+). In terms of biological role, catalyzes the methylthiolation of an aspartic acid residue of ribosomal protein uS12. The chain is Ribosomal protein uS12 methylthiotransferase RimO from Nitrosomonas eutropha (strain DSM 101675 / C91 / Nm57).